The chain runs to 158 residues: Transcription antitermination protein NusB (158 aa).

The segment covering 1-12 has biased composition (basic and acidic residues); the sequence is MKRVEKRAEKQG. A disordered region spans residues 1 to 20; sequence MKRVEKRAEKQGRGTARKSR.

This sequence belongs to the NusB family.

Its function is as follows. Involved in transcription antitermination. Required for transcription of ribosomal RNA (rRNA) genes. Binds specifically to the boxA antiterminator sequence of the ribosomal RNA (rrn) operons. In Nitrosospira multiformis (strain ATCC 25196 / NCIMB 11849 / C 71), this protein is Transcription antitermination protein NusB.